A 197-amino-acid chain; its full sequence is Ribonuclease HII (197 aa).

The RNase H type-2 domain maps to 11–197 (HLIAGVDEVG…FAPVKKILGL (187 aa)). 3 residues coordinate a divalent metal cation: aspartate 17, glutamate 18, and aspartate 109.

It belongs to the RNase HII family. It depends on Mn(2+) as a cofactor. The cofactor is Mg(2+).

The protein localises to the cytoplasm. It carries out the reaction Endonucleolytic cleavage to 5'-phosphomonoester.. In terms of biological role, endonuclease that specifically degrades the RNA of RNA-DNA hybrids. The protein is Ribonuclease HII of Actinobacillus pleuropneumoniae serotype 5b (strain L20).